A 417-amino-acid chain; its full sequence is Glutamyl-tRNA reductase (417 aa).

Residues 49–52, serine 107, 112–114, and glutamine 118 each bind substrate; these read TCNR and EEQ. Catalysis depends on cysteine 50, which acts as the Nucleophile. Residue 187–192 coordinates NADP(+); sequence GTGEVS.

The protein belongs to the glutamyl-tRNA reductase family. In terms of assembly, homodimer.

The enzyme catalyses (S)-4-amino-5-oxopentanoate + tRNA(Glu) + NADP(+) = L-glutamyl-tRNA(Glu) + NADPH + H(+). It functions in the pathway porphyrin-containing compound metabolism; protoporphyrin-IX biosynthesis; 5-aminolevulinate from L-glutamyl-tRNA(Glu): step 1/2. Functionally, catalyzes the NADPH-dependent reduction of glutamyl-tRNA(Glu) to glutamate 1-semialdehyde (GSA). The chain is Glutamyl-tRNA reductase from Cenarchaeum symbiosum (strain A).